The chain runs to 371 residues: Putative RNA-binding protein Luc7-like 1 (371 aa).

2 coiled-coil regions span residues 87-177 (MDHL…RNSM) and 218-259 (FIQI…LSRR). A compositionally biased stretch (basic and acidic residues) spans 232–257 (VAEKQEKRNQDRLRRREEREREERLS). Residues 232 to 371 (VAEKQEKRNQ…RSEEKEAGEI (140 aa)) form a disordered region. Basic residues predominate over residues 258 to 317 (RRSGSRTRDRRRSRSRDRRRRRSRSTSRERRKLSRSRSRDRHRRHRSRSRSHSRGHRRAS). Composition is skewed to basic and acidic residues over residues 318–351 (RDRSAKYKFSRERASREESWESGRSERGPPDWRL) and 361–371 (RRSEEKEAGEI). Phosphoserine is present on residues Ser332, Ser336, and Ser363.

This sequence belongs to the Luc7 family. In terms of tissue distribution, ubiquitous.

May bind to RNA via its Arg/Ser-rich domain. This Homo sapiens (Human) protein is Putative RNA-binding protein Luc7-like 1 (LUC7L).